A 769-amino-acid chain; its full sequence is Phosphoribosylformylglycinamidine synthase subunit PurL (769 aa).

A compositionally biased stretch (polar residues) spans 1-13 (MTGTPSAPTTSPD). The segment at 1–30 (MTGTPSAPTTSPDDQADGPGEGTVDRQPYR) is disordered. Residue His65 is part of the active site. Residues Tyr68 and Lys109 each contribute to the ATP site. A Mg(2+)-binding site is contributed by Glu111. Substrate contacts are provided by residues 112–115 (SHNH) and Arg134. His113 acts as the Proton acceptor in catalysis. Residue Asp135 participates in Mg(2+) binding. Gln260 provides a ligand contact to substrate. Mg(2+) is bound at residue Asp288. Residue 337–339 (ESQ) participates in substrate binding. Positions 524 and 561 each coordinate ATP. Asn562 contacts Mg(2+). Residue Ser564 coordinates substrate.

The protein belongs to the FGAMS family. As to quaternary structure, monomer. Part of the FGAM synthase complex composed of 1 PurL, 1 PurQ and 2 PurS subunits.

The protein resides in the cytoplasm. It catalyses the reaction N(2)-formyl-N(1)-(5-phospho-beta-D-ribosyl)glycinamide + L-glutamine + ATP + H2O = 2-formamido-N(1)-(5-O-phospho-beta-D-ribosyl)acetamidine + L-glutamate + ADP + phosphate + H(+). It participates in purine metabolism; IMP biosynthesis via de novo pathway; 5-amino-1-(5-phospho-D-ribosyl)imidazole from N(2)-formyl-N(1)-(5-phospho-D-ribosyl)glycinamide: step 1/2. Its function is as follows. Part of the phosphoribosylformylglycinamidine synthase complex involved in the purines biosynthetic pathway. Catalyzes the ATP-dependent conversion of formylglycinamide ribonucleotide (FGAR) and glutamine to yield formylglycinamidine ribonucleotide (FGAM) and glutamate. The FGAM synthase complex is composed of three subunits. PurQ produces an ammonia molecule by converting glutamine to glutamate. PurL transfers the ammonia molecule to FGAR to form FGAM in an ATP-dependent manner. PurS interacts with PurQ and PurL and is thought to assist in the transfer of the ammonia molecule from PurQ to PurL. This Parafrankia sp. (strain EAN1pec) protein is Phosphoribosylformylglycinamidine synthase subunit PurL.